A 498-amino-acid chain; its full sequence is Osteoclast stimulatory transmembrane protein (498 aa).

The Cytoplasmic portion of the chain corresponds to 1–51 (MRTIRAATEHLFGLGWKFWRLGICKAVVPLQAAWKAFSQPVPASCNELLTQ). Residues 52–72 (LLLCVSLASLIAGLAHHWLVS) form a helical membrane-spanning segment. Residues 73-81 (LQLYPLGPP) lie on the Extracellular side of the membrane. Residues 82–102 (ALVTSLCGLFVFLSLGLVPPI) form a helical membrane-spanning segment. The Cytoplasmic portion of the chain corresponds to 103 to 121 (RCLFVLSVPTLGSKQGRRL). Residues 122–142 (LLSYSAANLAVAVVPNVLGNV) traverse the membrane as a helical segment. Topologically, residues 143–226 (RAAGQVLSCV…LARAALGTQR (84 aa)) are extracellular. The helical transmembrane segment at 227–247 (VVTGLFLLGLLGESAWYLHRY) threads the bilayer. Over 248-303 (LTDLRFDNIYATRQLVRQLAQAGATHLLTSPPPWLLQTAQPKLSREELLSCLLRLG) the chain is Cytoplasmic. Residues 304–324 (LLALLLVATAVTVASDYGAFL) form a helical membrane-spanning segment. Residues 325-401 (LAQAAVAWAQ…QAQPPRVTAA (77 aa)) lie on the Extracellular side of the membrane. Residues 402–422 (LAAGALQLLAGATLVLQAYAW) traverse the membrane as a helical segment. The Cytoplasmic portion of the chain corresponds to 423–498 (RLRHTIAASF…DSLGPPYDLE (76 aa)). The interval 449–498 (QRRHNQSDHLNKQPGTMATRESRKPGQGTRTLESQGPQAHDSLGPPYDLE) is disordered. The span at 476 to 485 (GTRTLESQGP) shows a compositional bias: polar residues.

Expressed in osteoclast (at protein level). Ubiquitous. Highly expressed in multi-nuclear osteoclast cells compared to mono-nuclear macrophages. Expressed in foreign body giant cells (FBGCs).

Its subcellular location is the membrane. Functionally, probable cell surface receptor that plays a role in cellular fusion and cell differentiation. Cooperates with DCSTAMP in modulating cell-cell fusion in both osteoclasts and foreign body giant cells (FBGCs). Involved in osteoclast bone resorption. Promotes osteoclast differentiation and may play a role in the multinucleated osteoclast maturation. The chain is Osteoclast stimulatory transmembrane protein (Ocstamp) from Mus musculus (Mouse).